The sequence spans 1052 residues: Carboxylic acid reductase (1052 aa).

The segment at 21 to 344 (RALNEPNREW…ATEFTPFPFY (324 aa)) is adenylation (A) domain. Residues 334–335 (SA), T339, and 419–422 (YQGR) contribute to the AMP site. One can recognise a Carrier domain in the interval 560-643 (SSSDALIVSI…RLADYLLSIV (84 aa)). Residue S595 is modified to O-(pantetheine 4'-phosphoryl)serine. Residues 684-979 (GQVVVITGTT…QKIVPLDEWL (296 aa)) are carboxylic acid reductase (R) domain. NADP(+) is bound by residues 693–696 (TGGI), R718, 774–776 (NQW), S814, Y844, and K848.

It belongs to the adenylate-forming reductase family. It depends on Mg(2+) as a cofactor.

The catalysed reaction is an aromatic aldehyde + AMP + diphosphate + NADP(+) = an aromatic carboxylate + ATP + NADPH + H(+). It carries out the reaction a carboxylate + ATP + NADPH + H(+) = an aldehyde + AMP + diphosphate + NADP(+). It catalyses the reaction benzoate + ATP + NADPH + H(+) = benzaldehyde + AMP + diphosphate + NADP(+). The enzyme catalyses (E)-cinnamate + ATP + NADPH + H(+) = (E)-cinnamaldehyde + AMP + diphosphate + NADP(+). The catalysed reaction is piperonylate + ATP + NADPH + H(+) = piperonal + AMP + diphosphate + NADP(+). It carries out the reaction salicylate + ATP + NADPH + H(+) = salicylaldehyde + AMP + diphosphate + NADP(+). It catalyses the reaction 3-hydroxybenzoate + ATP + NADPH + H(+) = 3-hydroxybenzaldehyde + AMP + diphosphate + NADP(+). The enzyme catalyses 2-methoxybenzoate + ATP + NADPH + H(+) = 2-methoxybenzaldehyde + AMP + diphosphate + NADP(+). The catalysed reaction is 3-methoxybenzoate + ATP + NADPH + H(+) = 3-methoxybenzaldehyde + AMP + diphosphate + NADP(+). It carries out the reaction 4-hydroxybenzoate + ATP + NADPH + H(+) = 4-hydroxybenzaldehyde + AMP + diphosphate + NADP(+). It catalyses the reaction 4-methoxybenzoate + ATP + NADPH + H(+) = 4-methoxybenzaldehyde + AMP + diphosphate + NADP(+). The enzyme catalyses 3-phenylpropanoate + ATP + NADPH + H(+) = 3-phenylpropanal + AMP + diphosphate + NADP(+). The catalysed reaction is picolinate + ATP + NADPH + H(+) = picolinal + AMP + diphosphate + NADP(+). It carries out the reaction propanoate + ATP + NADPH + H(+) = propanal + AMP + diphosphate + NADP(+). It catalyses the reaction butanoate + ATP + NADPH + H(+) = butanal + AMP + diphosphate + NADP(+). The enzyme catalyses pentanoate + ATP + NADPH + H(+) = pentanal + AMP + diphosphate + NADP(+). The catalysed reaction is hexanoate + ATP + NADPH + H(+) = hexanal + AMP + diphosphate + NADP(+). It carries out the reaction heptanoate + ATP + NADPH + H(+) = heptanal + AMP + diphosphate + NADP(+). It catalyses the reaction octanoate + ATP + NADPH + H(+) = octanal + AMP + diphosphate + NADP(+). The enzyme catalyses nonanoate + ATP + NADPH + H(+) = nonanal + AMP + diphosphate + NADP(+). In terms of biological role, carboxylic acid reductase that shows a broad range of substrate specificity towards aromatic acids, especially to phenyl carboxylic and phenyl acrylic acids, to convert them into their respective aldehydes. Also able to use aliphatic acids as substrates. This Neurospora crassa (strain ATCC 24698 / 74-OR23-1A / CBS 708.71 / DSM 1257 / FGSC 987) protein is Carboxylic acid reductase.